The following is an 89-amino-acid chain: Large ribosomal subunit protein bL27 (89 aa).

Positions 1 to 20 (MAHKKAGGSSRNGRDSAGKR) are disordered.

The protein belongs to the bacterial ribosomal protein bL27 family.

This Rhodopseudomonas palustris (strain HaA2) protein is Large ribosomal subunit protein bL27.